A 361-amino-acid chain; its full sequence is RNA-binding protein 4 (361 aa).

RRM domains lie at 2–72 and 78–148; these read VKLF…ASKN and TKLH…LSTS. K79 participates in a covalent cross-link: Glycyl lysine isopeptide (Lys-Gly) (interchain with G-Cter in SUMO2). S86 is modified (phosphoserine). A CCHC-type zinc finger spans residues 160 to 177; it reads SGCYRCGKEGHWSKECPI. The interaction with TNPO3 stretch occupies residues 196–361; it reads AVRTPYTMSY…YADRARYSAF (166 aa). S306 carries the post-translational modification Phosphoserine.

In terms of assembly, interacts with TNPO3; the interaction mediates nuclear import of the protein and is disrupted by nuclear Ran bound to GTP. Interacts with EIF4G1 and WT1. Interacts with EIF4A1; the interaction is modulated under stress-induced conditions. Interacts with AGO1. Interacts with AGO2; the interaction occurs under both cell proliferation and differentiation conditions and in an RNA- and phosphorylation-independent manner. Interacts with DDX5; the interaction occurs in an RNA-independent manner. Interacts with RBPMS; the interaction allows cooperative assembly of RNA-bound stable cell-specific alternative splicing regulatory complexes. Post-translationally, phosphorylated. Phosphorylated in vitro on Ser-306 by SRPK1. Phosphorylation on Ser-306 is induced upon cell stress signaling, which alters its subcellular localization and may modulate its activity on IRES-mediated mRNA translation. Phosphorylated. Phosphorylation on Ser-306 is induced upon cell muscle differentiation. Expressed in the suprachiasmatic nucleus (SCN). Expressed in myocytes; expression gradually increases during muscle cell differentiation (at protein level). Expressed in the suprachiasmatic nucleus (SCN).

The protein localises to the nucleus. The protein resides in the nucleolus. It is found in the nucleus speckle. It localises to the cytoplasm. Its subcellular location is the cytoplasmic granule. Functionally, RNA-binding factor involved in multiple aspects of cellular processes like alternative splicing of pre-mRNA and translation regulation. Modulates alternative 5'-splice site and exon selection. Acts as a muscle cell differentiation-promoting factor. Activates exon skipping of the PTB pre-mRNA during muscle cell differentiation. Antagonizes the activity of the splicing factor PTBP1 to modulate muscle cell-specific exon selection of alpha tropomyosin. Binds to intronic pyrimidine-rich sequence of the TPM1 and MAPT pre-mRNAs. Required for the translational activation of PER1 mRNA in response to circadian clock. Binds directly to the 3'-UTR of the PER1 mRNA. Exerts a suppressive activity on Cap-dependent translation via binding to CU-rich responsive elements within the 3'UTR of mRNAs, a process increased under stress conditions or during myocytes differentiation. Recruits EIF4A1 to stimulate IRES-dependent translation initiation in respons to cellular stress. Associates to internal ribosome entry segment (IRES) in target mRNA species under stress conditions. Plays a role for miRNA-guided RNA cleavage and translation suppression by promoting association of AGO2-containing miRNPs with their cognate target mRNAs. Associates with miRNAs during muscle cell differentiation. Binds preferentially to 5'-CGCGCG[GCA]-3' motif in vitro. This chain is RNA-binding protein 4 (Rbm4), found in Mus musculus (Mouse).